Reading from the N-terminus, the 294-residue chain is Zinc finger protein 346 (294 aa).

An N-acetylmethionine modification is found at methionine 1. Residues 1–19 show a composition bias toward low complexity; it reads MECPAPDATDAADPGEAGP. The tract at residues 1 to 35 is disordered; it reads MECPAPDATDAADPGEAGPYKGSEEPEGREPDGVR. Residues 22–35 are compositionally biased toward basic and acidic residues; the sequence is GSEEPEGREPDGVR. The Matrin-type 1 zinc-finger motif lies at 70-104; it reads FTSTQCKVCCAMLISESQKLAHYQSKKHANKVKRY. Zn(2+) contacts are provided by cysteine 75, cysteine 78, histidine 91, and histidine 97. Lysine 114 participates in a covalent cross-link: Glycyl lysine isopeptide (Lys-Gly) (interchain with G-Cter in SUMO2). The segment at 131 to 165 adopts a Matrin-type 2 zinc-finger fold; sequence DKNHCCPICNMTFSSPAVAQSHYLGKTHAKSLKLK. Residues cysteine 136, cysteine 139, histidine 152, and histidine 158 each contribute to the Zn(2+) site. Lysine 170 is covalently cross-linked (Glycyl lysine isopeptide (Lys-Gly) (interchain with G-Cter in SUMO2)). Matrin-type zinc fingers lie at residues 182–216 and 236–270; these read DPDK…ETKL and GKGY…SPKT. The interval 269–294 is disordered; that stretch reads KTLVTLGSQTPVQTQPTPKDSSTVQD.

As to quaternary structure, forms a heteromeric complex with XPO5 and ILF3. Found in a nuclear export complex with XPO5, RAN, ILF3, ZNF346 and double-stranded RNA. Interacts with XPO5. Interacts with ILF3 in an RNA-independent manner. Expressed in all tissues tested, including heart, brain, spleen, lung, liver, muscle, kidney and testis. Exogenous expression induced apoptosis.

It is found in the nucleus. Its subcellular location is the nucleolus. The protein localises to the cytoplasm. Its function is as follows. Binds with low affinity to dsDNA and ssRNA, and with high affinity to dsRNA, with no detectable sequence specificity. May bind to specific miRNA hairpins. This Mus musculus (Mouse) protein is Zinc finger protein 346 (Znf346).